Consider the following 111-residue polypeptide: Large ribosomal subunit protein uL24 (111 aa).

Over residues 48–65 (EKPSRSNREGGRTEREAP) the composition is skewed to basic and acidic residues. The segment at 48 to 111 (EKPSRSNREG…AKTTGEELDD (64 aa)) is disordered. Polar residues predominate over residues 69 to 80 (SNVNPIDSNGES). Over residues 86-95 (KKVEDPDTGR) the composition is skewed to basic and acidic residues.

Belongs to the universal ribosomal protein uL24 family. In terms of assembly, part of the 50S ribosomal subunit.

One of two assembly initiator proteins, it binds directly to the 5'-end of the 23S rRNA, where it nucleates assembly of the 50S subunit. Its function is as follows. One of the proteins that surrounds the polypeptide exit tunnel on the outside of the subunit. The protein is Large ribosomal subunit protein uL24 of Salinibacter ruber (strain DSM 13855 / M31).